A 148-amino-acid chain; its full sequence is 3-dehydroquinate dehydratase (148 aa).

Residue tyrosine 23 is the Proton acceptor of the active site. 3 residues coordinate substrate: asparagine 75, histidine 81, and aspartate 88. The active-site Proton donor is histidine 101. Substrate is bound by residues 102 to 103 (LS) and arginine 112.

Belongs to the type-II 3-dehydroquinase family. As to quaternary structure, homododecamer.

It carries out the reaction 3-dehydroquinate = 3-dehydroshikimate + H2O. The protein operates within metabolic intermediate biosynthesis; chorismate biosynthesis; chorismate from D-erythrose 4-phosphate and phosphoenolpyruvate: step 3/7. In terms of biological role, catalyzes a trans-dehydration via an enolate intermediate. In Ectopseudomonas mendocina (strain ymp) (Pseudomonas mendocina), this protein is 3-dehydroquinate dehydratase.